The following is a 283-amino-acid chain: Pantothenate synthetase (283 aa).

30 to 37 (MGALHEGH) contributes to the ATP binding site. The active-site Proton donor is the His-37. Residue Gln-61 coordinates (R)-pantoate. Residue Gln-61 coordinates beta-alanine. 147–150 (GEKD) is a binding site for ATP. (R)-pantoate is bound at residue Gln-153. ATP-binding positions include Val-176 and 184–187 (VSSR).

This sequence belongs to the pantothenate synthetase family. Homodimer.

The protein resides in the cytoplasm. It carries out the reaction (R)-pantoate + beta-alanine + ATP = (R)-pantothenate + AMP + diphosphate + H(+). It functions in the pathway cofactor biosynthesis; (R)-pantothenate biosynthesis; (R)-pantothenate from (R)-pantoate and beta-alanine: step 1/1. In terms of biological role, catalyzes the condensation of pantoate with beta-alanine in an ATP-dependent reaction via a pantoyl-adenylate intermediate. This is Pantothenate synthetase from Chlorobium limicola (strain DSM 245 / NBRC 103803 / 6330).